The primary structure comprises 258 residues: Transcription initiation factor TFIID subunit 9B (258 aa).

The residue at position 1 (Met1) is an N-acetylmethionine. Phosphoserine is present on Ser147. Phosphothreonine is present on residues Thr159 and Thr174. The residue at position 177 (Ser177) is a Phosphoserine. The span at 227–236 (SSQSTATDSN) shows a compositional bias: polar residues. Residues 227–258 (SSQSTATDSNPLKRKHDDDDDDDDDDDDNDTM) form a disordered region. The span at 244-258 (DDDDDDDDDDDNDTM) shows a compositional bias: acidic residues.

This sequence belongs to the TAF9 family. As to quaternary structure, binds TAF5 and TAF6. Component of TFIID and the TATA-binding protein-free TAF complex (TFTC). TFIID is composed of TATA binding protein (TBP) and a number of TBP-associated factors (TAFs). Binds N-terminal domain of p53/TP53 which is essential for transcription.

The protein resides in the nucleus. Essential for cell viability. TAF9 and TAF9L are involved in transcriptional activation as well as repression of distinct but overlapping sets of genes. May have a role in gene regulation associated with apoptosis. TAFs are components of the transcription factor IID (TFIID) complex, the TBP-free TAFII complex (TFTC), the PCAF histone acetylase complex and the STAGA transcription coactivator-HAT complex. TFIID or TFTC are essential for the regulation of RNA polymerase II-mediated transcription. The sequence is that of Transcription initiation factor TFIID subunit 9B (Taf9b) from Rattus norvegicus (Rat).